The sequence spans 414 residues: Gamma-glutamyl phosphate reductase (414 aa).

It belongs to the gamma-glutamyl phosphate reductase family.

It localises to the cytoplasm. The catalysed reaction is L-glutamate 5-semialdehyde + phosphate + NADP(+) = L-glutamyl 5-phosphate + NADPH + H(+). The protein operates within amino-acid biosynthesis; L-proline biosynthesis; L-glutamate 5-semialdehyde from L-glutamate: step 2/2. Its function is as follows. Catalyzes the NADPH-dependent reduction of L-glutamate 5-phosphate into L-glutamate 5-semialdehyde and phosphate. The product spontaneously undergoes cyclization to form 1-pyrroline-5-carboxylate. The chain is Gamma-glutamyl phosphate reductase from Xanthomonas oryzae pv. oryzae (strain MAFF 311018).